The following is a 106-amino-acid chain: UPF0145 protein VC_A0951 (106 aa).

Belongs to the UPF0145 family.

This chain is UPF0145 protein VC_A0951, found in Vibrio cholerae serotype O1 (strain ATCC 39315 / El Tor Inaba N16961).